The following is a 351-amino-acid chain: Phosphoribosylformylglycinamidine cyclo-ligase (351 aa).

Belongs to the AIR synthase family.

Its subcellular location is the cytoplasm. The catalysed reaction is 2-formamido-N(1)-(5-O-phospho-beta-D-ribosyl)acetamidine + ATP = 5-amino-1-(5-phospho-beta-D-ribosyl)imidazole + ADP + phosphate + H(+). The protein operates within purine metabolism; IMP biosynthesis via de novo pathway; 5-amino-1-(5-phospho-D-ribosyl)imidazole from N(2)-formyl-N(1)-(5-phospho-D-ribosyl)glycinamide: step 2/2. This Burkholderia cenocepacia (strain ATCC BAA-245 / DSM 16553 / LMG 16656 / NCTC 13227 / J2315 / CF5610) (Burkholderia cepacia (strain J2315)) protein is Phosphoribosylformylglycinamidine cyclo-ligase.